A 300-amino-acid chain; its full sequence is Geranyl diphosphate 2-C-methyltransferase (300 aa).

The interval 1 to 24 (MAAASAPVPGPGGASSTARGRIPA) is disordered.

It belongs to the geranyl diphosphate 2-C-methyltransferase family. Mg(2+) serves as cofactor.

The enzyme catalyses (2E)-geranyl diphosphate + S-adenosyl-L-methionine = (E)-2-methylgeranyl diphosphate + S-adenosyl-L-homocysteine + H(+). In terms of biological role, catalyzes the SAM-dependent methylation of geranyl diphosphate (GPP) to yield (E)-2-methylgeranyl diphosphate (2-MeGPP). This is Geranyl diphosphate 2-C-methyltransferase (gdpmt) from Streptomyces lasalocidi (Streptomyces lasaliensis).